The primary structure comprises 952 residues: Substrate-adhesion molecule (952 aa).

The signal sequence occupies residues 1–25 (MKSQKIGSMILLIGILLAIFNFAYS). Topologically, residues 26 to 527 (DDDIERFSIN…TWFFDTNVET (502 aa)) are extracellular. Residues asparagine 78, asparagine 182, asparagine 231, asparagine 243, and asparagine 412 are each glycosylated (N-linked (GlcNAc...) asparagine). The EGF-like domain occupies 438-471 (EIRRCKDSCNGYGTCNTANYTCVCDSAHMGETCN). Disulfide bonds link cysteine 442–cysteine 452, cysteine 446–cysteine 459, and cysteine 461–cysteine 470. Residue asparagine 456 is glycosylated (N-linked (GlcNAc...) asparagine). Residues 528-548 (GVIALACIFIAFVGILYIIDI) form a helical membrane-spanning segment. Residues 549-591 (GTTVPIDIKRAKDYAEENKSGQFPKATHEEASVLWWRDQRSHK) lie on the Cytoplasmic side of the membrane. Residues 592-612 (AWTFMDQFQLISLVSHIGVVF) traverse the membrane as a helical segment. Residues 613–678 (PSRFISFTEY…GDLYLLPNIL (66 aa)) are Extracellular-facing. A helical membrane pass occupies residues 679–699 (FWFGLLLGVFLVPLLLAYAII). Over 700 to 722 (SFMESLIHWKEVVTNRLIHVLVR) the chain is Cytoplasmic. The helical transmembrane segment at 723–743 (ILTFGYIGVLIAASFAMVTPL) threads the bilayer. The Extracellular segment spans residues 744 to 752 (HDYRIIIPG). The chain crosses the membrane as a helical span at residues 753–773 (AIIFVLYGIGLPIAIWFLLAV). Topologically, residues 774–801 (PEARLHNPTFKQRFGCLYVHYKPKTDHR) are cytoplasmic. Residues 802–822 (FVVFMFIKRFIMAVIIGILSF) traverse the membrane as a helical segment. The Extracellular portion of the chain corresponds to 823 to 837 (KPMTNYPLTGTDLAV). The chain crosses the membrane as a helical span at residues 838-858 (PIVQVVVIDIALIGYAVLLFI). Over 859 to 868 (RKPYFDHYQL) the chain is Cytoplasmic. The chain crosses the membrane as a helical span at residues 869-889 (WLEYLLTAINIVTVSLSLTHI). Over 890-897 (KSPSAAGE) the chain is Extracellular. A helical transmembrane segment spans residues 898 to 918 (LIACLIQALALVACIAAYVVA). The Cytoplasmic portion of the chain corresponds to 919–952 (WLQMRSSFIKKVKKYLCCCCKSSKSSGEIDLSKK).

The protein resides in the cell membrane. Involved in substrate adhesion, myosin-independent cytokinesis, organization of actin cytoskeleton, and phagocytosis. The polypeptide is Substrate-adhesion molecule (sadA) (Dictyostelium discoideum (Social amoeba)).